The sequence spans 143 residues: Large ribosomal subunit protein uL13 (143 aa).

The protein belongs to the universal ribosomal protein uL13 family. Part of the 50S ribosomal subunit.

In terms of biological role, this protein is one of the early assembly proteins of the 50S ribosomal subunit, although it is not seen to bind rRNA by itself. It is important during the early stages of 50S assembly. This Prochlorococcus marinus (strain MIT 9301) protein is Large ribosomal subunit protein uL13.